A 596-amino-acid chain; its full sequence is Inactive metallocarboxypeptidase ecm14 (596 aa).

A signal peptide spans 1–26; it reads MSQSHSILSSLILLVAIIFCVPHVIA. A propeptide spanning residues 27–190 is cleaved from the precursor; sequence VPWTTDGHAQ…SYPSMAYADA (164 aa). Residue asparagine 114 is glycosylated (N-linked (GlcNAc...) asparagine). In terms of domain architecture, Peptidase M14 spans 220-540; it reads NYQPLSVIIP…NVIKYFGDFL (321 aa). Positions 285 and 288 each coordinate Zn(2+). Substrate is bound by residues 285 to 288, arginine 343, and 360 to 361; these read HARE and DR. An intrachain disulfide couples cysteine 354 to cysteine 376. Asparagine 400 is a glycosylation site (N-linked (GlcNAc...) asparagine). Histidine 416 is a binding site for Zn(2+). Residue 417–418 participates in substrate binding; it reads SY.

Belongs to the peptidase M14 family. Zn(2+) serves as cofactor.

The protein localises to the vacuole. It localises to the secreted. Inactive carboxypeptidase that may play a role in cell wall organization and biogenesis. In Sclerotinia sclerotiorum (strain ATCC 18683 / 1980 / Ss-1) (White mold), this protein is Inactive metallocarboxypeptidase ecm14 (ecm14).